Here is a 123-residue protein sequence, read N- to C-terminus: Large ribosomal subunit protein bL20 (123 aa).

The segment covering 1-15 (MARVKRSVNAKKKRR) has biased composition (basic residues). The interval 1–23 (MARVKRSVNAKKKRREVLDQASG) is disordered.

Belongs to the bacterial ribosomal protein bL20 family.

In terms of biological role, binds directly to 23S ribosomal RNA and is necessary for the in vitro assembly process of the 50S ribosomal subunit. It is not involved in the protein synthesizing functions of that subunit. The polypeptide is Large ribosomal subunit protein bL20 (Cutibacterium acnes (strain DSM 16379 / KPA171202) (Propionibacterium acnes)).